We begin with the raw amino-acid sequence, 132 residues long: MDVTRLLLATLLVFLCFFTADSHLPPEEKLRDDRSLRSNSSVNLLDFPSVSIVALNKKSKQISRKEAEKKRSSKKEASMKTVARPRTPLSAPCVATRNSCKPPAPACCDPCASCQCRFFRSACSCRVLSLNC.

Residues 1–22 form the signal peptide; sequence MDVTRLLLATLLVFLCFFTADS. Asparagine 39 carries an N-linked (GlcNAc...) asparagine glycan. The segment at 62 to 85 is disordered; the sequence is ISRKEAEKKRSSKKEASMKTVARP. Residues 63–78 are compositionally biased toward basic and acidic residues; that stretch reads SRKEAEKKRSSKKEAS. Disulfide bonds link cysteine 93–cysteine 108, cysteine 100–cysteine 114, cysteine 107–cysteine 125, cysteine 111–cysteine 132, and cysteine 116–cysteine 123. The Agouti domain occupies 93–132; sequence CVATRNSCKPPAPACCDPCASCQCRFFRSACSCRVLSLNC.

It localises to the secreted. Its function is as follows. Involved in the regulation of melanogenesis. The binding of ASP to MC1R precludes alpha-MSH initiated signaling and thus blocks production of cAMP, leading to a down-regulation of eumelanogenesis (brown/black pigment) and thus increasing synthesis of pheomelanin (yellow/red pigment). The protein is Agouti-signaling protein (ASIP) of Pongo pygmaeus (Bornean orangutan).